We begin with the raw amino-acid sequence, 260 residues long: MILDEIVAQKKIQLKKDMSRITIEGWKQKIKRPGIHKPLDFYGALKNNGDISIIAEVKKASPSKGIIKEDFDPLKIAKEYVESDIQAISVLTERNFFKGDEDYLVKIRQFCPLPILRKDFIIDLWQIYESRYIGADAILLIVSLLSDEELKKFQIVANILGMQCLVEVHDERELERALESGARIIGINNRDLRTFEVDLKNTEKLMNRIPNDRVVVSESGIKDTEDLKYLKELGVDAVLIGETFMRARSISEKIREFKAV.

Belongs to the TrpC family.

The catalysed reaction is 1-(2-carboxyphenylamino)-1-deoxy-D-ribulose 5-phosphate + H(+) = (1S,2R)-1-C-(indol-3-yl)glycerol 3-phosphate + CO2 + H2O. The protein operates within amino-acid biosynthesis; L-tryptophan biosynthesis; L-tryptophan from chorismate: step 4/5. This Acetivibrio thermocellus (strain ATCC 27405 / DSM 1237 / JCM 9322 / NBRC 103400 / NCIMB 10682 / NRRL B-4536 / VPI 7372) (Clostridium thermocellum) protein is Indole-3-glycerol phosphate synthase.